The primary structure comprises 335 residues: Gibberellin 2-beta-dioxygenase 3 (335 aa).

The region spanning 175-278 (ESDSCLRMNH…RISMIYFAGP (104 aa)) is the Fe2OG dioxygenase domain. Fe cation contacts are provided by His202, Asp204, and His259. Residue Arg269 is part of the active site.

This sequence belongs to the iron/ascorbate-dependent oxidoreductase family. GA2OX subfamily. Fe(2+) is required as a cofactor. In terms of tissue distribution, not expressed in the apex.

It catalyses the reaction gibberellin A1 + 2-oxoglutarate + O2 = gibberellin A8 + succinate + CO2. It participates in plant hormone biosynthesis; gibberellin biosynthesis. Catalyzes the 2-beta-hydroxylation of several biologically active gibberellins, leading to the homeostatic regulation of their endogenous level. Catabolism of gibberellins (GAs) plays a central role in plant development. Converts GA9/GA20 to GA51/GA29 and GA4/GA1 to GA34/GA8. The protein is Gibberellin 2-beta-dioxygenase 3 (GA2OX3) of Arabidopsis thaliana (Mouse-ear cress).